A 239-amino-acid chain; its full sequence is uncharacterized protein (239 aa).

Residues 13 to 66 enclose the HTH cro/C1-type domain; it reads IEYLVDKLNGPSEFARKTGVTLSTITRWRKGEADPSRSNLVKIAEVTGVSIEWL. The segment at residues 24–43 is a DNA-binding region (H-T-H motif); sequence SEFARKTGVTLSTITRWRKG.

This is an uncharacterized protein from Haemophilus influenzae (strain ATCC 51907 / DSM 11121 / KW20 / Rd).